The chain runs to 304 residues: Secreted mono- and diacylglycerol lipase MDL3 (304 aa).

The signal sequence occupies residues Met1–Gly19. A disulfide bond links Cys55 and Cys297. Residue Asn161 is glycosylated (N-linked (GlcNAc...) asparagine). Ser171 acts as the Nucleophile in catalysis. Catalysis depends on residues Asp228 and His281.

The protein belongs to the AB hydrolase superfamily. Lipase family. Class 3 subfamily.

It is found in the secreted. The protein localises to the cell wall. It carries out the reaction a monoacylglycerol + H2O = glycerol + a fatty acid + H(+). It catalyses the reaction a diacylglycerol + H2O = a monoacylglycerol + a fatty acid + H(+). Secreted lipase involved in Dandruff and seborrheic dermatitis (D/SD) probably via lipase-mediated breakdown of sebaceous lipids and release of irritating free fatty acids. Shows activity against monoglyceride and diglyceride substrates, but not triglyceride substrates and does not exhibit regio-selective production of diacylglycerols. Hydrolyzes distearin, dilinolein, dipalmitoylglycerol and dipalmitolein. Cleaves oleic acid from 1,2 isomers of diolein on both the 1 and the 2 position of the glycerol backbone, resulting mainly in free fatty acids but no monoolein is detected. Shows activity on monoolein and liberates mostly free fatty acids, but can also perform the reverse reaction and produce diolein. In Malassezia globosa (strain ATCC MYA-4612 / CBS 7966) (Dandruff-associated fungus), this protein is Secreted mono- and diacylglycerol lipase MDL3.